The chain runs to 273 residues: Coiled-coil domain-containing protein 122 (273 aa).

The segment covering Met-1 to Asn-17 has biased composition (basic and acidic residues). Residues Met-1–Ser-39 form a disordered region. Coiled coils occupy residues Ala-24 to Glu-116 and Asn-179 to Ile-269.

This is Coiled-coil domain-containing protein 122 (CCDC122) from Homo sapiens (Human).